The sequence spans 126 residues: Fluoride-specific ion channel FluC (126 aa).

Transmembrane regions (helical) follow at residues 33 to 53 (LPLNVLIVNVIGAFILGVFIV), 64 to 84 (YSLFAAIGFCGSLTTMSSFAL), and 96 to 116 (GALAANIIVNVGLSIGALIGG). Positions 74 and 77 each coordinate Na(+).

The protein belongs to the fluoride channel Fluc/FEX (TC 1.A.43) family.

It localises to the cell membrane. The enzyme catalyses fluoride(in) = fluoride(out). With respect to regulation, na(+) is not transported, but it plays an essential structural role and its presence is essential for fluoride channel function. Functionally, fluoride-specific ion channel. Important for reducing fluoride concentration in the cell, thus reducing its toxicity. This chain is Fluoride-specific ion channel FluC, found in Nitrosopumilus maritimus (strain SCM1).